We begin with the raw amino-acid sequence, 196 residues long: 3-isopropylmalate dehydratase small subunit (196 aa).

Belongs to the LeuD family. LeuD type 1 subfamily. As to quaternary structure, heterodimer of LeuC and LeuD.

The catalysed reaction is (2R,3S)-3-isopropylmalate = (2S)-2-isopropylmalate. The protein operates within amino-acid biosynthesis; L-leucine biosynthesis; L-leucine from 3-methyl-2-oxobutanoate: step 2/4. Its function is as follows. Catalyzes the isomerization between 2-isopropylmalate and 3-isopropylmalate, via the formation of 2-isopropylmaleate. The chain is 3-isopropylmalate dehydratase small subunit from Corynebacterium aurimucosum (strain ATCC 700975 / DSM 44827 / CIP 107346 / CN-1) (Corynebacterium nigricans).